Reading from the N-terminus, the 392-residue chain is Probable nucleoredoxin 3 (392 aa).

2 Thioredoxin domains span residues 17–171 (LYSI…DSKR) and 177–326 (EKLL…ELKA).

Belongs to the nucleoredoxin family.

The enzyme catalyses [protein]-dithiol + NAD(+) = [protein]-disulfide + NADH + H(+). The catalysed reaction is [protein]-dithiol + NADP(+) = [protein]-disulfide + NADPH + H(+). In terms of biological role, probable thiol-disulfide oxidoreductase that may participate in various redox reactions. The chain is Probable nucleoredoxin 3 from Arabidopsis thaliana (Mouse-ear cress).